We begin with the raw amino-acid sequence, 118 residues long: DNA mimic protein DMP12 (118 aa).

It belongs to the DMP12-like protein family. As to quaternary structure, monomer. Interacts with the dimeric form of the DNA-binding protein HU.

Functionally, acts as a DNA mimic. Interacts with the DNA-binding protein HU and partially prevents the binding of HU protein to DNA by occupying the DNA binding sites on the protein. However, the relatively weak affinity of DMP12 for HU suggests that it may not completely block the HU protein-DNA binding, and that DMP12 is more likely to act as a regulator than a competitive inhibitor. It protects HU protein from limited digestion by trypsin in a limited trypsin digestion assay, suggesting that it may serve to protect the HU protein and improve the stability of unbound HU protein. In Neisseria meningitidis serogroup B (strain ATCC BAA-335 / MC58), this protein is DNA mimic protein DMP12.